The sequence spans 227 residues: N-(5'-phosphoribosyl)anthranilate isomerase (227 aa).

The protein belongs to the TrpF family.

It carries out the reaction N-(5-phospho-beta-D-ribosyl)anthranilate = 1-(2-carboxyphenylamino)-1-deoxy-D-ribulose 5-phosphate. It functions in the pathway amino-acid biosynthesis; L-tryptophan biosynthesis; L-tryptophan from chorismate: step 3/5. This is N-(5'-phosphoribosyl)anthranilate isomerase from Herminiimonas arsenicoxydans.